The sequence spans 413 residues: Probable Xaa-Pro aminopeptidase UREG_07123 (413 aa).

Aspartate 194, aspartate 205, glutamate 340, and glutamate 379 together coordinate Mn(2+).

It belongs to the peptidase M24B family. The cofactor is Mn(2+).

The enzyme catalyses Release of any N-terminal amino acid, including proline, that is linked to proline, even from a dipeptide or tripeptide.. In terms of biological role, catalyzes the removal of a penultimate prolyl residue from the N-termini of peptides. This chain is Probable Xaa-Pro aminopeptidase UREG_07123, found in Uncinocarpus reesii (strain UAMH 1704).